The sequence spans 130 residues: Large ribosomal subunit protein bL20 (130 aa).

It belongs to the bacterial ribosomal protein bL20 family.

Functionally, binds directly to 23S ribosomal RNA and is necessary for the in vitro assembly process of the 50S ribosomal subunit. It is not involved in the protein synthesizing functions of that subunit. In Nocardioides sp. (strain ATCC BAA-499 / JS614), this protein is Large ribosomal subunit protein bL20.